The primary structure comprises 858 residues: Bifunctional uridylyltransferase/uridylyl-removing enzyme (858 aa).

The segment at 1–324 (MSAHAAPSPE…PATSGITRVL (324 aa)) is uridylyltransferase. The interval 325-681 (SADRFVEKQG…ARPSPIGDAL (357 aa)) is uridylyl-removing. Residues 443 to 565 (VDQHILMVLR…VGNERYLTAL (123 aa)) enclose the HD domain. 2 ACT domains span residues 682-763 (QVLV…PSKG) and 790-858 (ILSV…AIAV).

This sequence belongs to the GlnD family. Mg(2+) serves as cofactor.

It carries out the reaction [protein-PII]-L-tyrosine + UTP = [protein-PII]-uridylyl-L-tyrosine + diphosphate. The enzyme catalyses [protein-PII]-uridylyl-L-tyrosine + H2O = [protein-PII]-L-tyrosine + UMP + H(+). Its activity is regulated as follows. Uridylyltransferase (UTase) activity is inhibited by glutamine, while glutamine activates uridylyl-removing (UR) activity. Functionally, modifies, by uridylylation and deuridylylation, the PII regulatory proteins (GlnB and homologs), in response to the nitrogen status of the cell that GlnD senses through the glutamine level. Under low glutamine levels, catalyzes the conversion of the PII proteins and UTP to PII-UMP and PPi, while under higher glutamine levels, GlnD hydrolyzes PII-UMP to PII and UMP (deuridylylation). Thus, controls uridylylation state and activity of the PII proteins, and plays an important role in the regulation of nitrogen assimilation and metabolism. The sequence is that of Bifunctional uridylyltransferase/uridylyl-removing enzyme from Burkholderia orbicola (strain AU 1054).